Consider the following 213-residue polypeptide: Dimethyl sulfoxide reductase transcriptional activator (213 aa).

The HTH bat-type domain occupies 155-206; sequence LTAKQREAALIAVHHGYYETPRRTELATLAEALGISKSALSQRLNAVEAKLA.

Its function is as follows. Involved in activating dmsEABCD gene expression related to dimethyl sulfoxide (DMSO) reductase. Required for anaerobic respiration on dimethyl sulfoxide (DMSO). In Haloferax volcanii (strain ATCC 29605 / DSM 3757 / JCM 8879 / NBRC 14742 / NCIMB 2012 / VKM B-1768 / DS2) (Halobacterium volcanii), this protein is Dimethyl sulfoxide reductase transcriptional activator.